The following is a 547-amino-acid chain: Chaperonin GroEL (547 aa).

ATP is bound by residues 30 to 33, lysine 51, 87 to 91, glycine 415, and aspartate 496; these read TLGP and DGTTT. A disordered region spans residues 528–547; that stretch reads KGGGAPAGGGMPGGMGDMDF.

Belongs to the chaperonin (HSP60) family. Forms a cylinder of 14 subunits composed of two heptameric rings stacked back-to-back. Interacts with the co-chaperonin GroES.

The protein localises to the cytoplasm. It carries out the reaction ATP + H2O + a folded polypeptide = ADP + phosphate + an unfolded polypeptide.. Its function is as follows. Together with its co-chaperonin GroES, plays an essential role in assisting protein folding. The GroEL-GroES system forms a nano-cage that allows encapsulation of the non-native substrate proteins and provides a physical environment optimized to promote and accelerate protein folding. This is Chaperonin GroEL from Caulobacter vibrioides (strain ATCC 19089 / CIP 103742 / CB 15) (Caulobacter crescentus).